The following is a 100-amino-acid chain: Small ribosomal subunit protein uS14c (100 aa).

This sequence belongs to the universal ribosomal protein uS14 family. As to quaternary structure, part of the 30S ribosomal subunit.

It localises to the plastid. It is found in the chloroplast. Functionally, binds 16S rRNA, required for the assembly of 30S particles. This Pisum sativum (Garden pea) protein is Small ribosomal subunit protein uS14c.